Here is an 805-residue protein sequence, read N- to C-terminus: MDEDGLELQQEPNSFFDATGADGTHMDGDQIVVEVQETVFVSDVVDSDITVHNFVPDDPDSVVIQDVIEDVVIEDVQCPDIMEEADVSETVIIPEQVLDSDVTEEVSLAHCTVPDDVLASDITSASMSMPEHVLTGDSIHVSDVGHVGHVGHVEHVVHDSVVEAEIVTDPLTTDVVSEEVLVADCASEAVIDANGIPVDQQDDDKGNCEDYLMISLDDAGKIEHDGSSGMTMDTESEIDPCKVDGTCPEVIKVYIFKADPGEDDLGGTVDIVESEPENDHGVELLDQNSSIRVPREKMVYMTVNDSQPEDEDLNVAEIADEVYMEVIVGEEDAAAAAAAAAVHEQQMDDNEIKTFMPIAWAAAYGNNSDGIENRNGTASALLHIDESAGLGRLAKQKPKKRRRPDSRQYQTAIIIGPDGHPLTVYPCMICGKKFKSRGFLKRHMKNHPEHLAKKKYRCTDCDYTTNKKISLHNHLESHKLTSKAEKAIECDECGKHFSHAGALFTHKMVHKEKGANKMHKCKFCEYETAEQGLLNRHLLAVHSKNFPHICVECGKGFRHPSELKKHMRIHTGEKPYQCQYCEYRSADSSNLKTHVKTKHSKEMPFKCDICLLTFSDTKEVQQHALIHQESKTHQCLHCDHKSSNSSDLKRHIISVHTKDYPHKCDMCDKGFHRPSELKKHVAAHKGKKMHQCRHCDFKIADPFVLSRHILSVHTKDLPFRCKRCRKGFRQQSELKKHMKTHSGRKVYQCEYCEYSTTDASGFKRHVISIHTKDYPHRCEYCKKGFRRPSEKNQHIMRHHKEVGLP.

The residue at position 274 (Ser-274) is a Phosphoserine. C2H2-type zinc fingers lie at residues 425–447, 456–478, 488–510, 519–542, 548–570, 576–599, 605–627, 633–656, 662–684, 690–713, 719–741, 747–770, and 776–798; these read YPCM…MKNH, YRCT…LESH, IECD…KMVH, HKCK…LAVH, HICV…MRIH, YQCQ…KTKH, FKCD…ALIH, HQCL…ISVH, HKCD…VAAH, HQCR…LSVH, FRCK…MKTH, YQCE…ISIH, and HRCE…IMRH.

This sequence belongs to the krueppel C2H2-type zinc-finger protein family. ZFX/ZFY subfamily.

The protein resides in the nucleus. Functionally, probable transcriptional activator. The sequence is that of Zinc finger X-chromosomal protein (ZFX) from Homo sapiens (Human).